The primary structure comprises 205 residues: Isochorismatase domain-containing protein 2 (205 aa).

Belongs to the isochorismatase family.

In Xenopus laevis (African clawed frog), this protein is Isochorismatase domain-containing protein 2 (isoc2).